The following is a 349-amino-acid chain: Transmembrane protein 255A (349 aa).

Transmembrane regions (helical) follow at residues 30 to 50, 57 to 77, 89 to 109, and 226 to 246; these read IYVTVTLLIVSVLILTVGLAA, VTVGGYYPGVILGFGSFLGII, LVASIVFISFGVIAAFCCAIV, and TILNIVGLFLGIITAAVLGGF. The disordered stretch occupies residues 303–329; it reads PSSPPSGLSDEPQSASPSPSYMWSSSA. The segment covering 316–329 has biased composition (low complexity); sequence SASPSPSYMWSSSA.

The protein belongs to the TMEM255 family.

Its subcellular location is the membrane. The polypeptide is Transmembrane protein 255A (TMEM255A) (Homo sapiens (Human)).